The chain runs to 275 residues: MSNLQAIIEAAFEKRAEITPKTVDAETRAAIEEVIEGLDSGKYRVAEKIAGEWVTHQWLKKAVLLSFRINDNQIIDGAETKYYDKVALKFADYTEERFTEEGFRVVPSATVRKGAYISKNCVLMPSYVNIGAYVGEGTMVDTWATVGSCAQIGKNVHLSGGVGIGGVLEPLQANPTIIGDNCFIGARSEVVEGVIVEDGCVISMGVFIGQSTKIYDRETGEIHYGRVPAGSVVVSGSLPSKCGKYSLYCAVIVKKVDAKTLGKVGINELLRSIEE.

Substrate contacts are provided by Arg104 and Asp141.

The protein belongs to the transferase hexapeptide repeat family. In terms of assembly, homotrimer.

The protein resides in the cytoplasm. It carries out the reaction (S)-2,3,4,5-tetrahydrodipicolinate + succinyl-CoA + H2O = (S)-2-succinylamino-6-oxoheptanedioate + CoA. It functions in the pathway amino-acid biosynthesis; L-lysine biosynthesis via DAP pathway; LL-2,6-diaminopimelate from (S)-tetrahydrodipicolinate (succinylase route): step 1/3. The protein is 2,3,4,5-tetrahydropyridine-2,6-dicarboxylate N-succinyltransferase of Haemophilus influenzae (strain PittEE).